The chain runs to 345 residues: Ferredoxin--NADP reductase (345 aa).

Residues Asp-38, Gln-46, Tyr-51, Val-91, Phe-129, Asp-295, and Thr-336 each coordinate FAD.

Belongs to the ferredoxin--NADP reductase type 2 family. Homodimer. FAD serves as cofactor.

The catalysed reaction is 2 reduced [2Fe-2S]-[ferredoxin] + NADP(+) + H(+) = 2 oxidized [2Fe-2S]-[ferredoxin] + NADPH. The protein is Ferredoxin--NADP reductase of Rhodospirillum rubrum (strain ATCC 11170 / ATH 1.1.1 / DSM 467 / LMG 4362 / NCIMB 8255 / S1).